Consider the following 307-residue polypeptide: MENKSKYKTIDHVLCVEGNKKIHVWETLPEENSPKRKNTIIIASGFARRMDHFAGLAEYLSRNGFHVIRYDSLHHVGLSSGTIDEFTMSIGKQSLLAVVDWLNTRKINNRGILASSLSARIVYASLSEINVSFLITAVGVVNLRYTLERALGFDYLSLPINELPNNLDFEGHKLGAEVFARDCLDFGWEDLTSTINSMMYLDIPFIAFTANNDNWVKQDEVITLLSNIRSNRCKIYSLLGSSHDLGENLVVLRNFYQSVTKAAIAMDNDRLDIDVDIIEPSFEHLTIATVNERRMKIEIENQAISLS.

Catalysis depends on charge relay system residues S116, D213, and H243.

Belongs to the LuxD family.

It functions in the pathway lipid metabolism; fatty acid reduction for biolumincescence. In terms of biological role, acyl transferase is part of the fatty acid reductase system required for aldehyde biosynthesis; it produces fatty acids for the luminescent reaction. This Photorhabdus laumondii subsp. laumondii (strain DSM 15139 / CIP 105565 / TT01) (Photorhabdus luminescens subsp. laumondii) protein is Acyl transferase.